Consider the following 273-residue polypeptide: MSLSNAPLGQHVAYPSQYDPGLLFPIPRATNRASLQLGATLPFTGVDLWNAYELSWLDARGKPRVAMATFSFPADSPNIVESKSFKLYLNSFNQTRLPNAQALRDRLERDLAAAAGAPVGLKFISPQRFGELNMAELDGIYIDKLDIEIDTYEPAPQLLQCAPGDEVEETLATRLLKSNCPVTGQPDWASLQVRYRGRPIDRAALLKYVVSFRQHAEFHEHCVERIFGDIMRACQPRQLTVYARYTRRGGLDINPWRSNFESAPPADVRTARQ.

V80–S82 is a substrate binding site. NADPH is bound at residue S82–K83. C180 serves as the catalytic Thioimide intermediate. D187 functions as the Proton donor in the catalytic mechanism. Residue H219–E220 coordinates substrate. R248 to G249 contacts NADPH.

It belongs to the GTP cyclohydrolase I family. QueF type 2 subfamily. In terms of assembly, homodimer.

Its subcellular location is the cytoplasm. It carries out the reaction 7-aminomethyl-7-carbaguanine + 2 NADP(+) = 7-cyano-7-deazaguanine + 2 NADPH + 3 H(+). It functions in the pathway tRNA modification; tRNA-queuosine biosynthesis. Functionally, catalyzes the NADPH-dependent reduction of 7-cyano-7-deazaguanine (preQ0) to 7-aminomethyl-7-deazaguanine (preQ1). This chain is NADPH-dependent 7-cyano-7-deazaguanine reductase, found in Bordetella parapertussis (strain 12822 / ATCC BAA-587 / NCTC 13253).